Here is a 432-residue protein sequence, read N- to C-terminus: MNKPVLDIQDRPTVGQWITLSLQHLFAMFGATILVPYLVGLDPSIALLTSGLGTLAFLLITKWQVPAYLGSSFAYIAPIIAAKTAGGPGAAMIGSFLAGLVYGVVALIIKKAGYRWVMKLLPPVVVGPVIIVIGLGLAGTAVGMAMNGPDGKYSLLHFSVALVTLAATIVCSVLARGMLSLIPVLVGIVVGYLYALAVGLVDLSKVAAAKWFEWPDFLIPFADYPVRVTWEIVMLMVPVAIVTLSEHIGHQLVLSKVVGRDLIQKPGLHRSILGDGTATMISALLGGPPKTTYGENIGVLAITRVYSVYVLAGAAVIAIAFGFVGKITALISSIPTPVMGGVSILLFGIIASSGLRMLIDSRVDFGQTRNLVIASVILVIGIGGAVLKISDSFQITGMALSAIVGVLLNLILPGRPQAAENLFEENQSDHVA.

A run of 12 helical transmembrane segments spans residues 25–45 (LFAM…DPSI), 65–85 (VPAY…AKTA), 89–109 (GAAM…ALII), 124–144 (VVVG…AVGM), 155–175 (LLHF…SVLA), 181–201 (LIPV…VGLV), 206–226 (VAAA…DYPV), 228–248 (VTWE…SEHI), 305–325 (VYSV…GFVG), 330–350 (LISS…FGII), 370–390 (NLVI…LKIS), and 393–413 (FQIT…LILP).

This sequence belongs to the nucleobase:cation symporter-2 (NCS2) (TC 2.A.40) family.

It is found in the cell membrane. Functionally, transport of uracil in the cell. This Bacillus caldolyticus protein is Uracil permease (pyrP).